The following is a 474-amino-acid chain: 3-isopropylmalate dehydratase large subunit (474 aa).

[4Fe-4S] cluster is bound by residues Cys-350, Cys-415, and Cys-418.

The protein belongs to the aconitase/IPM isomerase family. LeuC type 1 subfamily. In terms of assembly, heterodimer of LeuC and LeuD. [4Fe-4S] cluster serves as cofactor.

The enzyme catalyses (2R,3S)-3-isopropylmalate = (2S)-2-isopropylmalate. Its pathway is amino-acid biosynthesis; L-leucine biosynthesis; L-leucine from 3-methyl-2-oxobutanoate: step 2/4. Catalyzes the isomerization between 2-isopropylmalate and 3-isopropylmalate, via the formation of 2-isopropylmaleate. The sequence is that of 3-isopropylmalate dehydratase large subunit from Phenylobacterium zucineum (strain HLK1).